A 485-amino-acid polypeptide reads, in one-letter code: NADH-quinone oxidoreductase subunit N (485 aa).

Transmembrane regions (helical) follow at residues 8–28 (LIALLPLLIVGLTVVVVMLSI), 35–55 (FLNATLSVVGLNAALLSLWFV), 75–95 (LYTGLVLLASLATCTFAYPWL), 105–125 (FYLLVLIAALGGILLANANHL), 127–147 (SLFLGIELISLPLFGLVGYAF), 159–179 (YTILSAAASSFLLFGMALVYA), 203–223 (LLAGLGLMIVGLGFKLSLVPF), 235–255 (PAPVSTFLATASKIAIFGVVM), 271–291 (VVLGVLAFASILFGNLMALTQ), 297–317 (LLGYSSISHLGYLLVALIALK), 326–346 (VGVYLAGYLFSSLGAFGVVSL), 374–394 (AVMTVMMLSLAGIPMTLGFIG), 408–427 (WWLTGAVVVGSAIGLYYYLR), and 455–475 (VVVLISALLVLVLGVWPQPLI).

This sequence belongs to the complex I subunit 2 family. In terms of assembly, NDH-1 is composed of 13 different subunits. Subunits NuoA, H, J, K, L, M, N constitute the membrane sector of the complex.

The protein resides in the cell inner membrane. The enzyme catalyses a quinone + NADH + 5 H(+)(in) = a quinol + NAD(+) + 4 H(+)(out). In terms of biological role, NDH-1 shuttles electrons from NADH, via FMN and iron-sulfur (Fe-S) centers, to quinones in the respiratory chain. The immediate electron acceptor for the enzyme in this species is believed to be ubiquinone. Couples the redox reaction to proton translocation (for every two electrons transferred, four hydrogen ions are translocated across the cytoplasmic membrane), and thus conserves the redox energy in a proton gradient. This chain is NADH-quinone oxidoreductase subunit N, found in Cronobacter sakazakii (strain ATCC BAA-894) (Enterobacter sakazakii).